A 521-amino-acid polypeptide reads, in one-letter code: Bifunctional purine biosynthesis protein PurH (521 aa).

Residues 1-147 enclose the MGS-like domain; that stretch reads MAKITRALIS…KNNADVTVLV (147 aa).

It belongs to the PurH family.

The enzyme catalyses (6R)-10-formyltetrahydrofolate + 5-amino-1-(5-phospho-beta-D-ribosyl)imidazole-4-carboxamide = 5-formamido-1-(5-phospho-D-ribosyl)imidazole-4-carboxamide + (6S)-5,6,7,8-tetrahydrofolate. The catalysed reaction is IMP + H2O = 5-formamido-1-(5-phospho-D-ribosyl)imidazole-4-carboxamide. Its pathway is purine metabolism; IMP biosynthesis via de novo pathway; 5-formamido-1-(5-phospho-D-ribosyl)imidazole-4-carboxamide from 5-amino-1-(5-phospho-D-ribosyl)imidazole-4-carboxamide (10-formyl THF route): step 1/1. It functions in the pathway purine metabolism; IMP biosynthesis via de novo pathway; IMP from 5-formamido-1-(5-phospho-D-ribosyl)imidazole-4-carboxamide: step 1/1. This is Bifunctional purine biosynthesis protein PurH from Geobacter sulfurreducens (strain ATCC 51573 / DSM 12127 / PCA).